Reading from the N-terminus, the 344-residue chain is Glycerol-3-phosphate dehydrogenase [NAD(P)+] (344 aa).

Residues serine 11, tryptophan 12, histidine 32, arginine 33, and lysine 105 each coordinate NADPH. Sn-glycerol 3-phosphate is bound by residues lysine 105, glycine 135, and serine 137. NADPH is bound at residue alanine 139. Residues lysine 190, aspartate 243, serine 253, arginine 254, and asparagine 255 each coordinate sn-glycerol 3-phosphate. The Proton acceptor role is filled by lysine 190. Arginine 254 is an NADPH binding site. Residues valine 278 and glutamate 280 each contribute to the NADPH site.

Belongs to the NAD-dependent glycerol-3-phosphate dehydrogenase family.

It is found in the cytoplasm. It catalyses the reaction sn-glycerol 3-phosphate + NAD(+) = dihydroxyacetone phosphate + NADH + H(+). The enzyme catalyses sn-glycerol 3-phosphate + NADP(+) = dihydroxyacetone phosphate + NADPH + H(+). It functions in the pathway membrane lipid metabolism; glycerophospholipid metabolism. Its function is as follows. Catalyzes the reduction of the glycolytic intermediate dihydroxyacetone phosphate (DHAP) to sn-glycerol 3-phosphate (G3P), the key precursor for phospholipid synthesis. In Oceanobacillus iheyensis (strain DSM 14371 / CIP 107618 / JCM 11309 / KCTC 3954 / HTE831), this protein is Glycerol-3-phosphate dehydrogenase [NAD(P)+].